The sequence spans 213 residues: Na(+)-translocating NADH-quinone reductase subunit D (213 aa).

A run of 7 helical transmembrane segments spans residues 21-41 (PLIA…VNTA), 42-62 (LTMG…VSLL), 77-97 (IIIS…FFDI), 101-121 (LSVF…AESL), 131-151 (FLDG…VSII), 153-173 (EFFG…FYAS), and 183-203 (FGLM…IWGV).

It belongs to the NqrDE/RnfAE family. Composed of six subunits; NqrA, NqrB, NqrC, NqrD, NqrE and NqrF.

It is found in the cell inner membrane. It catalyses the reaction a ubiquinone + n Na(+)(in) + NADH + H(+) = a ubiquinol + n Na(+)(out) + NAD(+). In terms of biological role, NQR complex catalyzes the reduction of ubiquinone-1 to ubiquinol by two successive reactions, coupled with the transport of Na(+) ions from the cytoplasm to the periplasm. NqrA to NqrE are probably involved in the second step, the conversion of ubisemiquinone to ubiquinol. This is Na(+)-translocating NADH-quinone reductase subunit D from Chlamydia abortus (strain DSM 27085 / S26/3) (Chlamydophila abortus).